Consider the following 370-residue polypeptide: 3-dehydroquinate synthase (370 aa).

NAD(+)-binding positions include 112–116, 136–137, K149, K158, and 176–179; these read GVIGD, TT, and TLAT. Residues E191, H254, and H276 each contribute to the Zn(2+) site.

It belongs to the sugar phosphate cyclases superfamily. Dehydroquinate synthase family. Co(2+) serves as cofactor. Requires Zn(2+) as cofactor. NAD(+) is required as a cofactor.

It localises to the cytoplasm. It catalyses the reaction 7-phospho-2-dehydro-3-deoxy-D-arabino-heptonate = 3-dehydroquinate + phosphate. Its pathway is metabolic intermediate biosynthesis; chorismate biosynthesis; chorismate from D-erythrose 4-phosphate and phosphoenolpyruvate: step 2/7. Catalyzes the conversion of 3-deoxy-D-arabino-heptulosonate 7-phosphate (DAHP) to dehydroquinate (DHQ). In Xylella fastidiosa (strain M12), this protein is 3-dehydroquinate synthase.